Here is a 301-residue protein sequence, read N- to C-terminus: Acetyl-coenzyme A carboxylase carboxyl transferase subunit beta (301 aa).

In terms of domain architecture, CoA carboxyltransferase N-terminal spans 25 to 294 (LWIKDPSTGE…NSDAPEHEKT (270 aa)). The tract at residues 282–301 (QPGNSDAPEHEKTEATDKAA) is disordered. Residues 288–301 (APEHEKTEATDKAA) are compositionally biased toward basic and acidic residues.

The protein belongs to the AccD/PCCB family. In terms of assembly, acetyl-CoA carboxylase is a heterohexamer composed of biotin carboxyl carrier protein (AccB), biotin carboxylase (AccC) and two subunits each of ACCase subunit alpha (AccA) and ACCase subunit beta (AccD).

The protein resides in the cytoplasm. The enzyme catalyses N(6)-carboxybiotinyl-L-lysyl-[protein] + acetyl-CoA = N(6)-biotinyl-L-lysyl-[protein] + malonyl-CoA. Its pathway is lipid metabolism; malonyl-CoA biosynthesis; malonyl-CoA from acetyl-CoA: step 1/1. Functionally, component of the acetyl coenzyme A carboxylase (ACC) complex. Biotin carboxylase (BC) catalyzes the carboxylation of biotin on its carrier protein (BCCP) and then the CO(2) group is transferred by the transcarboxylase to acetyl-CoA to form malonyl-CoA. The sequence is that of Acetyl-coenzyme A carboxylase carboxyl transferase subunit beta from Brucella anthropi (strain ATCC 49188 / DSM 6882 / CCUG 24695 / JCM 21032 / LMG 3331 / NBRC 15819 / NCTC 12168 / Alc 37) (Ochrobactrum anthropi).